A 345-amino-acid chain; its full sequence is S-adenosylmethionine:tRNA ribosyltransferase-isomerase (345 aa).

This sequence belongs to the QueA family. As to quaternary structure, monomer.

It localises to the cytoplasm. The catalysed reaction is 7-aminomethyl-7-carbaguanosine(34) in tRNA + S-adenosyl-L-methionine = epoxyqueuosine(34) in tRNA + adenine + L-methionine + 2 H(+). The protein operates within tRNA modification; tRNA-queuosine biosynthesis. Functionally, transfers and isomerizes the ribose moiety from AdoMet to the 7-aminomethyl group of 7-deazaguanine (preQ1-tRNA) to give epoxyqueuosine (oQ-tRNA). This is S-adenosylmethionine:tRNA ribosyltransferase-isomerase from Helicobacter pylori (strain G27).